Reading from the N-terminus, the 292-residue chain is Tumor necrosis factor alpha-induced protein 8-like protein 3 (292 aa).

Residues 81-107 form a disordered region; it reads DAQPAARSMDSDSGEQSEGEPVTAAGP. The tract at residues 109–292 is binding to phosphoinositides; that stretch reads VFSSKSLALQ…INKLLDEKVL (184 aa).

Belongs to the TNFAIP8 family. As to expression, widely expressed (at protein level). Highly expressed in most carcinoma cell lines.

It localises to the cytoplasm. It is found in the cell membrane. Functionally, acts as a lipid transfer protein. Preferentially captures and shuttles two lipid second messengers, i.e., phosphatidylinositol 4,5- bisphosphate and phosphatidylinositol 3,4,5-trisphosphate and increases their levels in the plasma membrane. Additionally, may also function as a lipid-presenting protein to enhance the activity of the PI3K-AKT and MEK-ERK pathways. May act as a regulator of tumorigenesis through its activation of phospholipid signaling. This chain is Tumor necrosis factor alpha-induced protein 8-like protein 3 (TNFAIP8L3), found in Homo sapiens (Human).